The following is a 352-amino-acid chain: Histidinol-phosphate aminotransferase (352 aa).

N6-(pyridoxal phosphate)lysine is present on K211.

This sequence belongs to the class-II pyridoxal-phosphate-dependent aminotransferase family. Histidinol-phosphate aminotransferase subfamily. In terms of assembly, homodimer. It depends on pyridoxal 5'-phosphate as a cofactor.

The enzyme catalyses L-histidinol phosphate + 2-oxoglutarate = 3-(imidazol-4-yl)-2-oxopropyl phosphate + L-glutamate. It functions in the pathway amino-acid biosynthesis; L-histidine biosynthesis; L-histidine from 5-phospho-alpha-D-ribose 1-diphosphate: step 7/9. The chain is Histidinol-phosphate aminotransferase from Haemophilus influenzae (strain PittGG).